The following is a 285-amino-acid chain: Acetyl-coenzyme A carboxylase carboxyl transferase subunit beta (285 aa).

A CoA carboxyltransferase N-terminal domain is found at 22 to 285 (LWTKCEACGA…HPGVAYAPGV (264 aa)). Residues Cys26, Cys29, Cys45, and Cys48 each contribute to the Zn(2+) site. Residues 26 to 48 (CEACGAQIYKKEFQENLHVCPKC) form a C4-type zinc finger.

This sequence belongs to the AccD/PCCB family. Acetyl-CoA carboxylase is a heterohexamer composed of biotin carboxyl carrier protein (AccB), biotin carboxylase (AccC) and two subunits each of ACCase subunit alpha (AccA) and ACCase subunit beta (AccD). It depends on Zn(2+) as a cofactor.

Its subcellular location is the cytoplasm. The enzyme catalyses N(6)-carboxybiotinyl-L-lysyl-[protein] + acetyl-CoA = N(6)-biotinyl-L-lysyl-[protein] + malonyl-CoA. It participates in lipid metabolism; malonyl-CoA biosynthesis; malonyl-CoA from acetyl-CoA: step 1/1. Component of the acetyl coenzyme A carboxylase (ACC) complex. Biotin carboxylase (BC) catalyzes the carboxylation of biotin on its carrier protein (BCCP) and then the CO(2) group is transferred by the transcarboxylase to acetyl-CoA to form malonyl-CoA. The polypeptide is Acetyl-coenzyme A carboxylase carboxyl transferase subunit beta (Thermus thermophilus (strain ATCC 27634 / DSM 579 / HB8)).